A 448-amino-acid polypeptide reads, in one-letter code: tRNA modification GTPase MnmE (448 aa).

3 residues coordinate (6S)-5-formyl-5,6,7,8-tetrahydrofolate: Arg-24, Glu-81, and Lys-120. Positions 216–373 (GLNVVLVGAP…LKRTLLREAG (158 aa)) constitute a TrmE-type G domain. A K(+)-binding site is contributed by Asn-226. GTP-binding positions include 226 to 231 (NVGKSS), 245 to 251 (TDIAGTT), and 270 to 273 (DTAG). Ser-230 serves as a coordination point for Mg(2+). Positions 245, 247, and 250 each coordinate K(+). Position 251 (Thr-251) interacts with Mg(2+). Lys-448 lines the (6S)-5-formyl-5,6,7,8-tetrahydrofolate pocket.

This sequence belongs to the TRAFAC class TrmE-Era-EngA-EngB-Septin-like GTPase superfamily. TrmE GTPase family. In terms of assembly, homodimer. Heterotetramer of two MnmE and two MnmG subunits. K(+) serves as cofactor.

The protein resides in the cytoplasm. Functionally, exhibits a very high intrinsic GTPase hydrolysis rate. Involved in the addition of a carboxymethylaminomethyl (cmnm) group at the wobble position (U34) of certain tRNAs, forming tRNA-cmnm(5)s(2)U34. This is tRNA modification GTPase MnmE from Neisseria meningitidis serogroup C (strain 053442).